We begin with the raw amino-acid sequence, 119 residues long: Ribonuclease P protein component (119 aa).

Belongs to the RnpA family. Consists of a catalytic RNA component (M1 or rnpB) and a protein subunit.

It carries out the reaction Endonucleolytic cleavage of RNA, removing 5'-extranucleotides from tRNA precursor.. Functionally, RNaseP catalyzes the removal of the 5'-leader sequence from pre-tRNA to produce the mature 5'-terminus. It can also cleave other RNA substrates such as 4.5S RNA. The protein component plays an auxiliary but essential role in vivo by binding to the 5'-leader sequence and broadening the substrate specificity of the ribozyme. This Halalkalibacterium halodurans (strain ATCC BAA-125 / DSM 18197 / FERM 7344 / JCM 9153 / C-125) (Bacillus halodurans) protein is Ribonuclease P protein component.